Reading from the N-terminus, the 299-residue chain is tRNA-cytidine(32) 2-sulfurtransferase (299 aa).

Positions 56-61 (SGGKDS) match the PP-loop motif motif. Positions 131, 134, and 222 each coordinate [4Fe-4S] cluster.

This sequence belongs to the TtcA family. In terms of assembly, homodimer. It depends on Mg(2+) as a cofactor. Requires [4Fe-4S] cluster as cofactor.

The protein localises to the cytoplasm. The enzyme catalyses cytidine(32) in tRNA + S-sulfanyl-L-cysteinyl-[cysteine desulfurase] + AH2 + ATP = 2-thiocytidine(32) in tRNA + L-cysteinyl-[cysteine desulfurase] + A + AMP + diphosphate + H(+). Its pathway is tRNA modification. Its function is as follows. Catalyzes the ATP-dependent 2-thiolation of cytidine in position 32 of tRNA, to form 2-thiocytidine (s(2)C32). The sulfur atoms are provided by the cysteine/cysteine desulfurase (IscS) system. The protein is tRNA-cytidine(32) 2-sulfurtransferase of Xylella fastidiosa (strain 9a5c).